A 436-amino-acid polypeptide reads, in one-letter code: Protein PhoH2 (436 aa).

A PINc domain is found at 12–137; that stretch reads RTYVLDTSVL…LVSKDLPMRL (126 aa).

This sequence in the N-terminal section; belongs to the PINc/VapC protein family. It in the C-terminal section; belongs to the PhoH family.

The catalysed reaction is n ATP + n H2O + wound RNA = n ADP + n phosphate + unwound RNA.. The enzyme catalyses ATP + H2O = ADP + phosphate + H(+). It carries out the reaction GTP + H2O = GDP + phosphate + H(+). Unwinds and/or cleaves 5'-tailed RNA in vitro, the reaction is maximal with hydrolyzable ATP; double-stranded (ds)RNA and dsDNA are not unwound. Unlike the protein in mycobacteria there does not seem to be an antitoxin gene upstream, suggesting this is not a toxin-antitoxin system. Has ATPase and GTPase activities. In Thermobispora bispora (strain ATCC 19993 / DSM 43833 / CBS 139.67 / JCM 10125 / KCTC 9307 / NBRC 14880 / R51), this protein is Protein PhoH2.